We begin with the raw amino-acid sequence, 842 residues long: Protein P (842 aa).

Residues 1 to 177 (MPLSYQHFRR…FCGSPYSWEQ (177 aa)) form a terminal protein domain (TP) region. The interval 178 to 345 (ELHHGAFLDG…YCLTHLVNLL (168 aa)) is spacer. The tract at residues 205–271 (SRPPVGSSIQ…RHAKNIASRP (67 aa)) is disordered. Polar residues predominate over residues 223–239 (GPQSQQRPLDGSQQGRS). The segment at 346–689 (EDWGPCTEHG…YLNLYPVARQ (344 aa)) is polymerase/reverse transcriptase domain (RT). Positions 356-599 (KHHIRIPRTP…YSLNFMGYVI (244 aa)) constitute a Reverse transcriptase domain. The Mg(2+) site is built by aspartate 428, aspartate 550, and aspartate 551.

This sequence belongs to the hepadnaviridae P protein family.

The enzyme catalyses DNA(n) + a 2'-deoxyribonucleoside 5'-triphosphate = DNA(n+1) + diphosphate. It carries out the reaction Endonucleolytic cleavage to 5'-phosphomonoester.. With respect to regulation, activated by host HSP70 and HSP40 in vitro to be able to bind the epsilon loop of the pgRNA. Because deletion of the RNase H region renders the protein partly chaperone-independent, the chaperones may be needed indirectly to relieve occlusion of the RNA-binding site by this domain. Inhibited by several reverse-transcriptase inhibitors: Lamivudine, Adefovir and Entecavir. Its function is as follows. Multifunctional enzyme that converts the viral RNA genome into dsDNA in viral cytoplasmic capsids. This enzyme displays a DNA polymerase activity that can copy either DNA or RNA templates, and a ribonuclease H (RNase H) activity that cleaves the RNA strand of RNA-DNA heteroduplexes in a partially processive 3'- to 5'-endonucleasic mode. Neo-synthesized pregenomic RNA (pgRNA) are encapsidated together with the P protein, and reverse-transcribed inside the nucleocapsid. Initiation of reverse-transcription occurs first by binding the epsilon loop on the pgRNA genome, and is initiated by protein priming, thereby the 5'-end of (-)DNA is covalently linked to P protein. Partial (+)DNA is synthesized from the (-)DNA template and generates the relaxed circular DNA (RC-DNA) genome. After budding and infection, the RC-DNA migrates in the nucleus, and is converted into a plasmid-like covalently closed circular DNA (cccDNA). The activity of P protein does not seem to be necessary for cccDNA generation, and is presumably released from (+)DNA by host nuclear DNA repair machinery. In Hepatitis B virus genotype E subtype ayw4 (isolate Kou) (HBV-E), this protein is Protein P.